A 59-amino-acid chain; its full sequence is Large ribosomal subunit protein uL30 (59 aa).

The protein belongs to the universal ribosomal protein uL30 family. As to quaternary structure, part of the 50S ribosomal subunit.

In Ruminiclostridium cellulolyticum (strain ATCC 35319 / DSM 5812 / JCM 6584 / H10) (Clostridium cellulolyticum), this protein is Large ribosomal subunit protein uL30.